A 173-amino-acid chain; its full sequence is Large ribosomal subunit protein uL10 (173 aa).

It belongs to the universal ribosomal protein uL10 family. In terms of assembly, part of the ribosomal stalk of the 50S ribosomal subunit. The N-terminus interacts with L11 and the large rRNA to form the base of the stalk. The C-terminus forms an elongated spine to which L12 dimers bind in a sequential fashion forming a multimeric L10(L12)X complex.

In terms of biological role, forms part of the ribosomal stalk, playing a central role in the interaction of the ribosome with GTP-bound translation factors. This chain is Large ribosomal subunit protein uL10, found in Thermus thermophilus (strain ATCC BAA-163 / DSM 7039 / HB27).